The primary structure comprises 130 residues: Small ribosomal subunit protein uS9 (130 aa).

It belongs to the universal ribosomal protein uS9 family.

In Pseudomonas aeruginosa (strain LESB58), this protein is Small ribosomal subunit protein uS9.